The following is a 53-amino-acid chain: ComX pheromone (53 aa).

A propeptide spanning residues 1–46 is cleaved from the precursor; that stretch reads MQEMVGYLIKYPNVLREVMEGNACLLGVDKDQSECIINGFKGLEIY. The 3'-geranyl-2',N2-cyclotryptophan moiety is linked to residue tryptophan 51.

As to quaternary structure, interacts directly with the sensor histidine kinase ComP and stimulates its activity. In terms of processing, trp-51 is modified by geranylation, which is essential for activity. Modified by the tryptophan prenyltransferase ComQ before export to the extracellular environment. The type of isoprenyl derivative differs among the different pherotypes and depends on ComX primary sequence.

It is found in the secreted. Part of a major quorum-sensing system that regulates the development of genetic competence. Acts through the activation of the two-component regulatory system ComP/ComA composed of a sensor histidine kinase, ComP, and a response regulator, ComA. The sequence is that of ComX pheromone from Bacillus mojavensis.